A 624-amino-acid polypeptide reads, in one-letter code: Glycosyltransferase AglD (624 aa).

Residue Asp201 is part of the active site. The next 8 membrane-spanning stretches (helical) occupy residues 260-280 (VTIV…TLYI), 285-305 (VISV…VIYV), 381-401 (LLTI…TGGL), 427-447 (AAYV…GIAL), 496-518 (VGLT…LLAL), 532-552 (FFAV…GGVG), 556-576 (IAFT…ALAA), and 587-607 (VTIV…TTAV).

This sequence belongs to the glycosyltransferase 2 family.

It is found in the cell membrane. The protein operates within cell surface structure biogenesis; S-layer biogenesis. Functionally, involved in the assembly of a N-linked pentasaccharide that decorates the S-layer glycoprotein and flagellins. Catalyzes the addition of the mannose found at position 5 of the pentasaccharide to its own distinct dolichol phosphate carrier. The chain is Glycosyltransferase AglD (aglD) from Haloferax volcanii (strain ATCC 29605 / DSM 3757 / JCM 8879 / NBRC 14742 / NCIMB 2012 / VKM B-1768 / DS2) (Halobacterium volcanii).